The primary structure comprises 129 residues: Small ribosomal subunit protein uS11 (129 aa).

This sequence belongs to the universal ribosomal protein uS11 family. In terms of assembly, part of the 30S ribosomal subunit. Interacts with proteins S7 and S18. Binds to IF-3.

Located on the platform of the 30S subunit, it bridges several disparate RNA helices of the 16S rRNA. Forms part of the Shine-Dalgarno cleft in the 70S ribosome. The chain is Small ribosomal subunit protein uS11 from Azoarcus sp. (strain BH72).